Reading from the N-terminus, the 397-residue chain is N-acetyllactosaminide beta-1,3-N-acetylglucosaminyltransferase 2 (397 aa).

The Cytoplasmic portion of the chain corresponds to Met1–Arg7. A helical; Signal-anchor for type II membrane protein transmembrane segment spans residues Ile8–Ser28. Residues Lys29–Cys397 are Lumenal-facing. N-linked (GlcNAc...) asparagine glycosylation is found at Asn79, Asn89, Asn127, Asn173, and Asn219.

Belongs to the glycosyltransferase 31 family. Interacts with B3GNT8; this interaction greatly increases B3GNT2 catalytic activity, independently of B3GNT8 enzymatic activity. Mn(2+) is required as a cofactor. Ubiquitous.

The protein localises to the golgi apparatus membrane. The enzyme catalyses a beta-D-galactosyl-(1-&gt;4)-N-acetyl-beta-D-glucosaminyl derivative + UDP-N-acetyl-alpha-D-glucosamine = an N-acetyl-beta-D-glucosaminyl-(1-&gt;3)-beta-D-galactosyl-(1-&gt;4)-N-acetyl-beta-D-glucosaminyl derivative + UDP + H(+). It participates in protein modification; protein glycosylation. Its function is as follows. Beta-1,3-N-acetylglucosaminyltransferase involved in the synthesis of poly-N-acetyllactosamine. Catalyzes the initiation and elongation of poly-N-acetyllactosamine chains. Shows a marked preference for Gal(beta1-4)Glc(NAc)-based acceptors. Probably constitutes the main polylactosamine synthase. The protein is N-acetyllactosaminide beta-1,3-N-acetylglucosaminyltransferase 2 (B3GNT2) of Homo sapiens (Human).